The primary structure comprises 150 residues: Large ribosomal subunit protein uL15 (150 aa).

The segment at 1 to 57 (MTLRLESLKPNKGARRRKLRKGRGIAAGQGASCGFGMRGQKSRSGRPTRPGFEGGQM) is disordered. Over residues 12–23 (KGARRRKLRKGR) the composition is skewed to basic residues. Residues 25–37 (IAAGQGASCGFGM) show a composition bias toward gly residues.

Belongs to the universal ribosomal protein uL15 family. In terms of assembly, part of the 50S ribosomal subunit.

Its function is as follows. Binds to the 23S rRNA. This chain is Large ribosomal subunit protein uL15, found in Synechococcus sp. (strain CC9311).